The sequence spans 187 residues: Dihydrofolate reductase (187 aa).

A DHFR domain is found at 4–185; it reads PLNCIVAVSQ…IKYKFEVYEK (182 aa). NADP(+) contacts are provided by residues Ala10 and 16 to 22; that span reads GIGKNGD. 31 to 36 serves as a coordination point for substrate; the sequence is EFKYFQ. Position 33 is an N6-acetyllysine; alternate (Lys33). Position 33 is an N6-succinyllysine; alternate (Lys33). 55 to 57 provides a ligand contact to NADP(+); sequence RKT. Residue Arg71 coordinates substrate. NADP(+)-binding positions include 77–79 and 117–124; these read SRE and GGSSVYQE.

The protein belongs to the dihydrofolate reductase family. In terms of assembly, homodimer.

The protein resides in the mitochondrion. Its subcellular location is the cytoplasm. The catalysed reaction is (6S)-5,6,7,8-tetrahydrofolate + NADP(+) = 7,8-dihydrofolate + NADPH + H(+). It functions in the pathway cofactor biosynthesis; tetrahydrofolate biosynthesis; 5,6,7,8-tetrahydrofolate from 7,8-dihydrofolate: step 1/1. Its function is as follows. Key enzyme in folate metabolism. Contributes to the de novo mitochondrial thymidylate biosynthesis pathway. Catalyzes an essential reaction for de novo glycine and purine synthesis, and for DNA precursor synthesis. Binds its own mRNA. This is Dihydrofolate reductase (Dhfr) from Rattus norvegicus (Rat).